The following is a 277-amino-acid chain: MKQLYGVIGNPIGHSLSPVMHNDAFEHLNMDAHYLAFLVEEEALGEAVKGLKALGISGFNVTTPHKVAIMEYLDEIAPLARQIGAVNTVVHRDGKLIGYNTDGIGFVRALQSISEDPLQEKRILLIGAGGASRAIYFSLADVGVKEIDIANRTRDKAKNLISGCMENVNSHALSLECAAENQGEYDIIIQTTTIGMHPHVEYTPLEIRSLKQGTIVSDIIYNPFETKILGDAKEQGAIIQNGIDMFVYQGALAFEMWTGCVPNIDRMKQLVMRELGG.

Shikimate-binding positions include 15–17 and Thr62; that span reads SLS. The active-site Proton acceptor is the Lys66. Shikimate is bound by residues Asn87 and Asp102. NADP(+)-binding positions include 127–131, 151–156, and Ile219; these read GAGGA and NRTRDK. Tyr221 is a binding site for shikimate. Gly242 serves as a coordination point for NADP(+).

It belongs to the shikimate dehydrogenase family. In terms of assembly, homodimer.

It catalyses the reaction shikimate + NADP(+) = 3-dehydroshikimate + NADPH + H(+). It functions in the pathway metabolic intermediate biosynthesis; chorismate biosynthesis; chorismate from D-erythrose 4-phosphate and phosphoenolpyruvate: step 4/7. Its function is as follows. Involved in the biosynthesis of the chorismate, which leads to the biosynthesis of aromatic amino acids. Catalyzes the reversible NADPH linked reduction of 3-dehydroshikimate (DHSA) to yield shikimate (SA). This chain is Shikimate dehydrogenase (NADP(+)), found in Bacillus mycoides (strain KBAB4) (Bacillus weihenstephanensis).